The primary structure comprises 275 residues: MNAEAIQTPMTVDVKADDKPYFDAPSKMSAKNVSVFYGDKRAIDDVSIEIPQRYVTAFIGPSGCGKSTFLRSLNRMNDTIANARVEGEILLDGEDIYKSGMDVVQLRARVGMVFQKPNPFPKSIYENIAYGPKIHGITGSKAELDEIVEQSLRRAGLWDEVKDRLGDSGTALSGGQQQRLCIARAIAVDPEVILMDEPCSALDPIATARIEELIDELRGRYAIVIVTHSMQQAARVSQRTAFFHLGKIVEYGKTSDIFTNPREERTKDYITGRYG.

In terms of domain architecture, ABC transporter spans 28 to 270 (MSAKNVSVFY…PREERTKDYI (243 aa)). 60 to 67 (GPSGCGKS) serves as a coordination point for ATP.

Belongs to the ABC transporter superfamily. Phosphate importer (TC 3.A.1.7) family. The complex is composed of two ATP-binding proteins (PstB), two transmembrane proteins (PstC and PstA) and a solute-binding protein (PstS).

It localises to the cell inner membrane. It catalyses the reaction phosphate(out) + ATP + H2O = ADP + 2 phosphate(in) + H(+). In terms of biological role, part of the ABC transporter complex PstSACB involved in phosphate import. Responsible for energy coupling to the transport system. This Novosphingobium aromaticivorans (strain ATCC 700278 / DSM 12444 / CCUG 56034 / CIP 105152 / NBRC 16084 / F199) protein is Phosphate import ATP-binding protein PstB.